Consider the following 129-residue polypeptide: 3-oxo-4,17-pregnadiene-20-carboxyl-CoA hydratase beta subunit (129 aa).

This sequence belongs to the thioester dehydratase family. Heterodimer composed of ChsH1 and ChsH2. Two heterodimers combine to form a heterotetramer. The complex interacts with Ltp2 via the DUF35 C-terminal region of ChsH2. The ChsH1-ChsH2-Ltp2 protein complex is composed of two protomers that form a heterohexameric structure through the Ltp2 dimerization interface.

It catalyses the reaction 3-oxochola-4,17-dien-22-oyl-CoA + H2O = 17-hydroxy-3-oxochol-4-en-22-oyl-CoA. The enzyme catalyses (2E)-octenoyl-CoA + H2O = 3-hydroxyoctanoyl-CoA. It carries out the reaction (2E)-decenoyl-CoA + H2O = 3-hydroxydecanoyl-CoA. Its pathway is steroid metabolism; cholesterol degradation. With respect to regulation, in the absence of the Ltp2 aldolase, ChsH1/ChsH2 can hydrate only about 30% of the 3-OPDC-CoA substrate. Complete turnover requires the presence of Ltp2. Involved in cholesterol side chain degradation. Catalyzes the hydration of 3-oxo-4,17-pregnadiene-20-carboxyl-CoA (3-OPDC-CoA) to form 17-hydroxy-3-oxo-4-pregnene-20-carboxyl-CoA (17-HOPC-CoA), in the modified beta-oxidation pathway for cholesterol side chain degradation. Can also use octenoyl-CoA and decenoyl-CoA, with lower efficiency. This Mycobacterium tuberculosis (strain ATCC 25618 / H37Rv) protein is 3-oxo-4,17-pregnadiene-20-carboxyl-CoA hydratase beta subunit.